Consider the following 86-residue polypeptide: Large ribosomal subunit protein bL31B (86 aa).

Belongs to the bacterial ribosomal protein bL31 family. Type B subfamily. As to quaternary structure, part of the 50S ribosomal subunit.

This is Large ribosomal subunit protein bL31B from Vibrio vulnificus (strain CMCP6).